The following is a 236-amino-acid chain: 2,3,4,5-tetrahydropyridine-2,6-dicarboxylate N-acetyltransferase (236 aa).

The protein belongs to the transferase hexapeptide repeat family. DapH subfamily.

It catalyses the reaction (S)-2,3,4,5-tetrahydrodipicolinate + acetyl-CoA + H2O = L-2-acetamido-6-oxoheptanedioate + CoA. It participates in amino-acid biosynthesis; L-lysine biosynthesis via DAP pathway; LL-2,6-diaminopimelate from (S)-tetrahydrodipicolinate (acetylase route): step 1/3. Functionally, catalyzes the transfer of an acetyl group from acetyl-CoA to tetrahydrodipicolinate. This is 2,3,4,5-tetrahydropyridine-2,6-dicarboxylate N-acetyltransferase from Clostridium botulinum (strain 657 / Type Ba4).